An 83-amino-acid chain; its full sequence is Putative protein T-ENOL (83 aa).

Residues 1-33 (MASTPMGNEGEKKSSWPSQAAPSLRGGPASLSR) form a disordered region.

The polypeptide is Putative protein T-ENOL (Homo sapiens (Human)).